The following is a 1263-amino-acid chain: Valine--tRNA ligase (1263 aa).

Residue Ser2 is modified to N-acetylserine. Residues 89–219 (GSRAAVLVQQ…YSGARSVTQQ (131 aa)) form the GST C-terminal domain. Positions 218–294 (QQPGSEVIAP…PGEKKDVSGA (77 aa)) are disordered. 2 stretches are compositionally biased toward basic and acidic residues: residues 234–248 (LKKE…EKFQ) and 259–274 (HGEK…KRDP). The 'HIGH' region motif lies at 343–353 (PNVTGSLHLGH). Phosphoserine occurs at positions 436 and 526. An N6-acetyllysine modification is found at Lys644. The short motif at 861-865 (KMSKS) is the 'KMSKS' region element. Position 864 (Lys864) interacts with ATP.

It belongs to the class-I aminoacyl-tRNA synthetase family. As to quaternary structure, forms high-molecular-mass aggregates with elongation factor 1.

The enzyme catalyses tRNA(Val) + L-valine + ATP = L-valyl-tRNA(Val) + AMP + diphosphate. Its activity is regulated as follows. Can be regulated by protein kinase C-dependent phosphorylation. This Mus musculus (Mouse) protein is Valine--tRNA ligase (Vars1).